We begin with the raw amino-acid sequence, 419 residues long: Putative zinc metalloprotease SPy_1963/M5005_Spy1674 (419 aa).

His-18 contributes to the Zn(2+) binding site. Glu-19 is a catalytic residue. His-22 contacts Zn(2+). 4 helical membrane-spanning segments follow: residues 169–191, 301–323, 343–365, and 392–411; these read LITNFAGPMNNFILGIVVFILLV, LAWSRAFTILNALKGLITGFSLN, LESVLSLMAMLSINLGIFNLIPI, and AYITLAGVAIMVVLMIAVTW. The PDZ domain occupies 175–274; sequence GPMNNFILGI…LKTVAVKPQK (100 aa).

This sequence belongs to the peptidase M50B family. Zn(2+) is required as a cofactor.

It is found in the cell membrane. This Streptococcus pyogenes serotype M1 protein is Putative zinc metalloprotease SPy_1963/M5005_Spy1674.